The chain runs to 352 residues: 4-hydroxy-3-methylbut-2-enyl diphosphate reductase (352 aa).

Cys-36 is a binding site for [4Fe-4S] cluster. The (2E)-4-hydroxy-3-methylbut-2-enyl diphosphate site is built by His-76 and His-114. Residues His-76 and His-114 each coordinate dimethylallyl diphosphate. Isopentenyl diphosphate contacts are provided by His-76 and His-114. Cys-136 contacts [4Fe-4S] cluster. Residue His-164 coordinates (2E)-4-hydroxy-3-methylbut-2-enyl diphosphate. His-164 serves as a coordination point for dimethylallyl diphosphate. His-164 is a binding site for isopentenyl diphosphate. The Proton donor role is filled by Glu-166. Thr-204 serves as a coordination point for (2E)-4-hydroxy-3-methylbut-2-enyl diphosphate. Cys-234 is a binding site for [4Fe-4S] cluster. (2E)-4-hydroxy-3-methylbut-2-enyl diphosphate is bound by residues Ser-262, Ser-263, Asn-264, and Ser-309. The dimethylallyl diphosphate site is built by Ser-262, Ser-263, Asn-264, and Ser-309. Isopentenyl diphosphate is bound by residues Ser-262, Ser-263, Asn-264, and Ser-309.

It belongs to the IspH family. [4Fe-4S] cluster serves as cofactor.

The enzyme catalyses isopentenyl diphosphate + 2 oxidized [2Fe-2S]-[ferredoxin] + H2O = (2E)-4-hydroxy-3-methylbut-2-enyl diphosphate + 2 reduced [2Fe-2S]-[ferredoxin] + 2 H(+). The catalysed reaction is dimethylallyl diphosphate + 2 oxidized [2Fe-2S]-[ferredoxin] + H2O = (2E)-4-hydroxy-3-methylbut-2-enyl diphosphate + 2 reduced [2Fe-2S]-[ferredoxin] + 2 H(+). Its pathway is isoprenoid biosynthesis; dimethylallyl diphosphate biosynthesis; dimethylallyl diphosphate from (2E)-4-hydroxy-3-methylbutenyl diphosphate: step 1/1. It participates in isoprenoid biosynthesis; isopentenyl diphosphate biosynthesis via DXP pathway; isopentenyl diphosphate from 1-deoxy-D-xylulose 5-phosphate: step 6/6. In terms of biological role, catalyzes the conversion of 1-hydroxy-2-methyl-2-(E)-butenyl 4-diphosphate (HMBPP) into a mixture of isopentenyl diphosphate (IPP) and dimethylallyl diphosphate (DMAPP). Acts in the terminal step of the DOXP/MEP pathway for isoprenoid precursor biosynthesis. The chain is 4-hydroxy-3-methylbut-2-enyl diphosphate reductase from Bifidobacterium longum (strain NCC 2705).